Reading from the N-terminus, the 293-residue chain is Ribosomal protein L11 methyltransferase (293 aa).

S-adenosyl-L-methionine is bound by residues threonine 145, glycine 166, aspartate 188, and asparagine 230.

Belongs to the methyltransferase superfamily. PrmA family.

The protein localises to the cytoplasm. It carries out the reaction L-lysyl-[protein] + 3 S-adenosyl-L-methionine = N(6),N(6),N(6)-trimethyl-L-lysyl-[protein] + 3 S-adenosyl-L-homocysteine + 3 H(+). Its function is as follows. Methylates ribosomal protein L11. This chain is Ribosomal protein L11 methyltransferase, found in Erwinia tasmaniensis (strain DSM 17950 / CFBP 7177 / CIP 109463 / NCPPB 4357 / Et1/99).